We begin with the raw amino-acid sequence, 224 residues long: Polyadenylate-binding protein 2 (224 aa).

Positions Met-1–Gly-36 are enriched in acidic residues. Residues Met-1–Ile-40 form a disordered region. Residues Asn-9–Gly-74 are a coiled coil. The region spanning Arg-96–Thr-173 is the RRM domain.

Interacts with ZC3H3. As to expression, expressed ubiquitously in all transcriptionally active cells.

The protein localises to the nucleus. Its subcellular location is the cytoplasm. Involved in the 3'-end formation of mRNA precursors (pre-mRNA) by the addition of a poly(A) tail of 200-250 nt to the upstream cleavage product. Stimulates poly(A) polymerase (PAPOLA) conferring processivity on the poly(A) tail elongation reaction and also controls the poly(A) tail length. Increases the affinity of poly(A) polymerase for RNA. Binds to poly(A) and to poly(G) with high affinity. May protect the poly(A) tail from degradation. Plays a role in the positive regulation of alpha-1,3 fucosylation, possibly by cooperating with swm which regulates nuclear export of fucosyltransferase FucTA. Involved in germline stem cell transit amplification, differentiation and mitosis-to-meiosis transition. This is Polyadenylate-binding protein 2 from Drosophila melanogaster (Fruit fly).